A 156-amino-acid polypeptide reads, in one-letter code: Transcriptional repressor NrdR (156 aa).

A zinc finger lies at 3-34 (CPFCQHDDTQVLDTRISEEGDSIRRRRRCVSC). One can recognise an ATP-cone domain in the interval 49 to 139 (PVIVKKNGSR…VYKSFEDVAE (91 aa)).

Belongs to the NrdR family. Requires Zn(2+) as cofactor.

Its function is as follows. Negatively regulates transcription of bacterial ribonucleotide reductase nrd genes and operons by binding to NrdR-boxes. The sequence is that of Transcriptional repressor NrdR from Herminiimonas arsenicoxydans.